A 525-amino-acid chain; its full sequence is uncharacterized protein (525 aa).

Composition is skewed to polar residues over residues 139 to 149 and 336 to 349; these read LNSTPDKTQAG and SGKTDNAQETHTTS. Disordered stretches follow at residues 139 to 158 and 330 to 356; these read LNSTPDKTQAGKTAKQHQAP and PAPAKNSGKTDNAQETHTTSPPGPYAT.

This is an uncharacterized protein from Treponema pallidum (strain Nichols).